The sequence spans 493 residues: Glutamate--tRNA ligase (493 aa).

A 'HIGH' region motif is present at residues 9 to 19 (PSPTGFVHIGS). Residues 258-262 (KLSKR) carry the 'KMSKS' region motif. Residue Lys-261 coordinates ATP.

It belongs to the class-I aminoacyl-tRNA synthetase family. Glutamate--tRNA ligase type 1 subfamily. In terms of assembly, monomer.

The protein localises to the cytoplasm. It carries out the reaction tRNA(Glu) + L-glutamate + ATP = L-glutamyl-tRNA(Glu) + AMP + diphosphate. Its function is as follows. Catalyzes the attachment of glutamate to tRNA(Glu) in a two-step reaction: glutamate is first activated by ATP to form Glu-AMP and then transferred to the acceptor end of tRNA(Glu). The polypeptide is Glutamate--tRNA ligase (Clostridioides difficile (strain 630) (Peptoclostridium difficile)).